The following is a 255-amino-acid chain: MSRPILEVSGLTMRFGGLLAVNGVNLKVEEKQVVSMIGPNGAGKTTVFNCLTGFYQPTGGLIRLDGEEIQGLPGHKIARKGVVRTFQNVRLFKEMTAVENLLVAQHRHLNTNFLAGLFKTPAFRRSEREAMEYAAHWLEEVNLTEFANRSAGTLAYGQQRRLEIARCMMTRPRILMLDEPAAGLNPKETDDLKALIAKLRSEHNVTVLLIEHDMKLVMSISDHIVVINQGAPLADGTPEQIRDNPDVIKAYLGEA.

Positions 6–254 (LEVSGLTMRF…PDVIKAYLGE (249 aa)) constitute an ABC transporter domain. 38–45 (GPNGAGKT) serves as a coordination point for ATP.

This sequence belongs to the ABC transporter superfamily.

Its subcellular location is the cell inner membrane. In terms of biological role, component of the high affinity leucine, isoleucine, valine, transport system (LIV-I), which is operative without Na(+) and is specific for alanine and threonine, in addition to branched-chain amino acids. The chain is High-affinity branched-chain amino acid transport ATP-binding protein BraF (braF) from Pseudomonas aeruginosa (strain ATCC 15692 / DSM 22644 / CIP 104116 / JCM 14847 / LMG 12228 / 1C / PRS 101 / PAO1).